The chain runs to 195 residues: Interferon tau (195 aa).

The signal sequence occupies residues 1-23 (MAFVLSLLMALVLASYSPGGSLG). 2 cysteine pairs are disulfide-bonded: Cys-24–Cys-122 and Cys-52–Cys-162.

This sequence belongs to the alpha/beta interferon family. IFN-alphaII subfamily. In terms of tissue distribution, constitutively and exclusively expressed in the mononuclear cells of the extraembryonic trophectoderm.

It is found in the secreted. Paracrine hormone primarily responsible for maternal recognition of pregnancy. Interacts with endometrial receptors, probably type I interferon receptors, and blocks estrogen receptor expression, preventing the estrogen-induced increase in oxytocin receptor expression in the endometrium. This results in the suppression of the pulsatile endometrial release of the luteolytic hormone prostaglandin F2-alpha, hindering the regression of the corpus luteum (luteolysis) and therefore a return to ovarian cyclicity. This, and a possible direct effect of IFN-tau on prostaglandin synthesis, leads in turn to continued ovarian progesterone secretion, which stimulates the secretion by the endometrium of the nutrients required for the growth of the conceptus. In summary, displays particularly high antiviral and antiproliferative potency concurrently with particular weak cytotoxicity, high antiluteolytic activity and immunomodulatory properties. In contrast with other IFNs, IFN-tau is not virally inducible. The polypeptide is Interferon tau (IFNT) (Cervus elaphus (Red deer)).